Reading from the N-terminus, the 472-residue chain is Protein nucleotidyltransferase YdiU (472 aa).

Residues glycine 86, glycine 88, arginine 89, lysine 109, aspartate 121, glycine 122, arginine 172, and arginine 179 each coordinate ATP. The active-site Proton acceptor is aspartate 244. The Mg(2+) site is built by asparagine 245 and aspartate 254. Aspartate 254 contributes to the ATP binding site.

Belongs to the SELO family. Mg(2+) is required as a cofactor. Requires Mn(2+) as cofactor.

It catalyses the reaction L-seryl-[protein] + ATP = 3-O-(5'-adenylyl)-L-seryl-[protein] + diphosphate. The catalysed reaction is L-threonyl-[protein] + ATP = 3-O-(5'-adenylyl)-L-threonyl-[protein] + diphosphate. It carries out the reaction L-tyrosyl-[protein] + ATP = O-(5'-adenylyl)-L-tyrosyl-[protein] + diphosphate. The enzyme catalyses L-histidyl-[protein] + UTP = N(tele)-(5'-uridylyl)-L-histidyl-[protein] + diphosphate. It catalyses the reaction L-seryl-[protein] + UTP = O-(5'-uridylyl)-L-seryl-[protein] + diphosphate. The catalysed reaction is L-tyrosyl-[protein] + UTP = O-(5'-uridylyl)-L-tyrosyl-[protein] + diphosphate. In terms of biological role, nucleotidyltransferase involved in the post-translational modification of proteins. It can catalyze the addition of adenosine monophosphate (AMP) or uridine monophosphate (UMP) to a protein, resulting in modifications known as AMPylation and UMPylation. This Ruegeria sp. (strain TM1040) (Silicibacter sp.) protein is Protein nucleotidyltransferase YdiU.